The sequence spans 425 residues: Serine hydroxymethyltransferase (425 aa).

132–134 contacts (6S)-5,6,7,8-tetrahydrofolate; the sequence is GHL. Lys-237 carries the N6-(pyridoxal phosphate)lysine modification.

Belongs to the SHMT family. Homodimer. It depends on pyridoxal 5'-phosphate as a cofactor.

Its subcellular location is the cytoplasm. The enzyme catalyses (6R)-5,10-methylene-5,6,7,8-tetrahydrofolate + glycine + H2O = (6S)-5,6,7,8-tetrahydrofolate + L-serine. The protein operates within one-carbon metabolism; tetrahydrofolate interconversion. It functions in the pathway amino-acid biosynthesis; glycine biosynthesis; glycine from L-serine: step 1/1. Catalyzes the reversible interconversion of serine and glycine with tetrahydrofolate (THF) serving as the one-carbon carrier. This reaction serves as the major source of one-carbon groups required for the biosynthesis of purines, thymidylate, methionine, and other important biomolecules. Also exhibits THF-independent aldolase activity toward beta-hydroxyamino acids, producing glycine and aldehydes, via a retro-aldol mechanism. This Wolbachia sp. subsp. Brugia malayi (strain TRS) protein is Serine hydroxymethyltransferase.